Consider the following 360-residue polypeptide: Protein Wnt-2 (360 aa).

An N-terminal signal peptide occupies residues 1–25 (MNAPLGGIWLWLPLLLTWLTPEVNS). 11 disulfides stabilise this stretch: cysteine 76–cysteine 87, cysteine 127–cysteine 135, cysteine 137–cysteine 157, cysteine 206–cysteine 220, cysteine 208–cysteine 215, cysteine 278–cysteine 309, cysteine 294–cysteine 304, cysteine 308–cysteine 348, cysteine 324–cysteine 339, cysteine 326–cysteine 336, and cysteine 331–cysteine 332. The O-palmitoleoyl serine; by PORCN moiety is linked to residue serine 212. Asparagine 295 carries N-linked (GlcNAc...) asparagine glycosylation.

This sequence belongs to the Wnt family. In terms of processing, palmitoleoylation is required for efficient binding to frizzled receptors. Depalmitoleoylation leads to Wnt signaling pathway inhibition.

Its subcellular location is the secreted. The protein resides in the extracellular space. It localises to the extracellular matrix. In terms of biological role, ligand for members of the frizzled family of seven transmembrane receptors. Functions in the canonical Wnt signaling pathway that results in activation of transcription factors of the TCF/LEF family. Functions as a upstream regulator of FGF10 expression. Plays an important role in embryonic lung development. May contribute to embryonic brain development by regulating the proliferation of dopaminergic precursors and neurons. This is Protein Wnt-2 (WNT2) from Gorilla gorilla gorilla (Western lowland gorilla).